Consider the following 370-residue polypeptide: Aminomethyltransferase (370 aa).

It belongs to the GcvT family. The glycine cleavage system is composed of four proteins: P, T, L and H.

The enzyme catalyses N(6)-[(R)-S(8)-aminomethyldihydrolipoyl]-L-lysyl-[protein] + (6S)-5,6,7,8-tetrahydrofolate = N(6)-[(R)-dihydrolipoyl]-L-lysyl-[protein] + (6R)-5,10-methylene-5,6,7,8-tetrahydrofolate + NH4(+). The glycine cleavage system catalyzes the degradation of glycine. The sequence is that of Aminomethyltransferase from Clostridium botulinum (strain ATCC 19397 / Type A).